The primary structure comprises 805 residues: Mediator of RNA polymerase II transcription subunit 25 (805 aa).

Disordered regions lie at residues 430–455 (GSAQ…GQTV) and 786–805 (SQSQ…GFMN). Low complexity-rich tracts occupy residues 438–451 (SAPS…PSMS) and 786–795 (SQSQGSSQGL).

Belongs to the Mediator complex subunit 25 family. In terms of assembly, interacts with MYC2 (via N-terminus). MED25 competes with JAZ7 for binding to MYC2.

Its function is as follows. Component of the Mediator complex, a coactivator involved in the regulated transcription of nearly all RNA polymerase II-dependent genes. Mediator functions as a bridge to convey information from gene-specific regulatory proteins to the basal RNA polymerase II transcription machinery. Mediator is recruited to promoters by direct interactions with regulatory proteins and serves as a scaffold for the assembly of a functional pre-initiation complex with RNA polymerase II and the general transcription factors. Plays a positive role in wound-induced activation of jasmonate-responsive genes whose promoters are targeted by MYC2. In Solanum lycopersicum (Tomato), this protein is Mediator of RNA polymerase II transcription subunit 25.